A 430-amino-acid chain; its full sequence is Microtubule-associated protein tau (430 aa).

Basic and acidic residues predominate over residues 1-16; sequence MAEPRQEFDTAEDHAE. Residues 1–245 form a disordered region; it reads MAEPRQEFDT…PVPMPDLKNV (245 aa). N-acetylalanine is present on alanine 2. Tyrosine 18 is modified (phosphotyrosine). Residue lysine 31 forms a Glycyl lysine isopeptide (Lys-Gly) (interchain with G-Cter in ubiquitin) linkage. Residues serine 33 and serine 48 each carry the phosphoserine modification. Residues 48–58 are compositionally biased toward polar residues; sequence SETSDAKSTPT. Phosphothreonine is present on residues threonine 56, threonine 58, and threonine 98. Positions 117–133 are enriched in basic and acidic residues; sequence KGKEGTGSEDRKAKGAD. Threonine 142 carries the phosphothreonine modification. Omega-N-methylarginine is present on arginine 144. At lysine 152 the chain carries N6,N6-dimethyllysine; alternate. Lysine 152 is modified (N6-acetyllysine; alternate). A phosphothreonine mark is found at threonine 158, threonine 164, threonine 165, and threonine 170. The span at 161-203 shows a compositional bias: low complexity; that stretch reads PAKTTPSPKTPPGTGEPAKSGDRSGYSSPGSPGTPGSRSRTPS. Phosphoserine occurs at positions 180 and 184. A Phosphotyrosine modification is found at tyrosine 186. Residues serine 187, serine 188, and serine 191 each carry the phosphoserine modification. A phosphothreonine mark is found at threonine 194 and threonine 201. Position 203 is a phosphoserine (serine 203). Position 206 is a phosphothreonine (threonine 206). An N6-acetyllysine modification is found at lysine 214. Threonine 220 carries the post-translational modification Phosphothreonine. Serine 224 and serine 226 each carry phosphoserine. Tau/MAP repeat units lie at residues 233–263, 264–294, 295–325, and 326–357; these read QTAPVPMPDLKNVRSKIGSTENLKHQPGGGK, VQIINKKLDLSNVQSKCGSKDNIKHVPGGGS, VQIVYKPVDLSKVTSKCGSLGNIHHKPGGGQ, and VEVKSEKLDFKDRVQSKIGSLDNITHVPGGGN. Lysine 243 is covalently cross-linked (Glycyl lysine isopeptide (Lys-Gly) (interchain with G-Cter in ubiquitin)). Lysine 248 carries the N6-acetyllysine; alternate modification. Lysine 248 bears the N6-methyllysine; alternate mark. A Glycyl lysine isopeptide (Lys-Gly) (interchain with G-Cter in ubiquitin); alternate cross-link involves residue lysine 248. At serine 251 the chain carries Phosphoserine. Lysine 256 participates in a covalent cross-link: Glycyl lysine isopeptide (Lys-Gly) (interchain with G-Cter in ubiquitin). Lysine 270 carries the N6-acetyllysine; alternate modification. Lysine 270 participates in a covalent cross-link: Glycyl lysine isopeptide (Lys-Gly) (interchain with G-Cter in ubiquitin); alternate. Phosphoserine is present on residues serine 274 and serine 278. Residue lysine 279 is modified to N6-acetyllysine. A disulfide bridge links cysteine 280 with cysteine 311. Position 282 is a phosphoserine (serine 282). Lysine 287 is modified (N6-acetyllysine; alternate). Lysine 287 is covalently cross-linked (Glycyl lysine isopeptide (Lys-Gly) (interchain with G-Cter in ubiquitin); alternate). Residue serine 294 is modified to Phosphoserine. N6,N6-dimethyllysine; alternate is present on lysine 300. N6-acetyllysine; alternate is present on residues lysine 300, lysine 306, and lysine 310. Glycyl lysine isopeptide (Lys-Gly) (interchain with G-Cter in ubiquitin); alternate cross-links involve residues lysine 300, lysine 306, and lysine 310. Residue serine 313 is modified to Phosphoserine. N6-acetyllysine; alternate occurs at positions 320, 332, and 336. Residues lysine 320, lysine 332, and lysine 336 each participate in a glycyl lysine isopeptide (Lys-Gly) (interchain with G-Cter in ubiquitin); alternate cross-link. Residue arginine 338 is modified to Omega-N-methylarginine. A Phosphoserine modification is found at serine 341. Residue lysine 342 forms a Glycyl lysine isopeptide (Lys-Gly) (interchain with G-Cter in ubiquitin) linkage. Phosphoserine is present on serine 345. An N6-acetyllysine; alternate modification is found at lysine 358. Residue lysine 358 forms a Glycyl lysine isopeptide (Lys-Gly) (interchain with G-Cter in ubiquitin); alternate linkage. Residue lysine 364 forms a Glycyl lysine isopeptide (Lys-Gly) (interchain with G-Cter in ubiquitin) linkage. N6-acetyllysine; alternate is present on lysine 374. A Glycyl lysine isopeptide (Lys-Gly) (interchain with G-Cter in ubiquitin); alternate cross-link involves residue lysine 374. Position 383 is a phosphotyrosine (tyrosine 383). 2 positions are modified to phosphoserine: serine 385 and serine 389. A disordered region spans residues 387 to 406; sequence VVSGDTSPRHLSNVSSTGSI. The span at 390-406 shows a compositional bias: polar residues; sequence GDTSPRHLSNVSSTGSI. A Phosphothreonine modification is found at threonine 392. Serine 393, serine 398, serine 405, and serine 411 each carry phosphoserine. Threonine 416 is subject to Phosphothreonine.

Interacts with MARK1, MARK2, MARK3 and MARK4. Interacts with SQSTM1 when polyubiquitinated. Interacts with PSMC2 through SQSTM1. Interacts with FKBP4. Binds to CSNK1D. Interacts with SGK1. Interacts with PIN1. Interacts with LRRK2. Interacts with LRP1, leading to endocytosis; this interaction is reduced in the presence of LRPAP1/RAP. In terms of processing, polyubiquitinated. Requires functional TRAF6 and may provoke SQSTM1-dependent degradation by the proteasome. Phosphorylation at various serine and threonine residues in S-P or T-P motifs by proline-directed protein kinases (PDPK1, CDK1, CDK5, GSK3, MAPK) (a few sites per protein in interphase, more in mitosis), and at serine residues in K-X-G-S motifs by MAP/microtubule affinity-regulating kinase (MARK1, MARK2, MARK3 or MARK4), causing detachment from microtubules, and their disassembly. Phosphorylation at Ser-345 by BRSK1 and BRSK2 in neurons affects ability to bind microtubules and plays a role in neuron polarization. Phosphorylated by PHK. Dephosphorylation at several serine and threonine residues by the serine/threonine phosphatase PPP5C. Post-translationally, hyperphosphorylated (in particular at Thr-170, Ser-191, Thr-194, Ser-251, and Ser-345) during hibernation. Phosphorylation is fully reversible after arousal. Highly phosphorylated tau contains a number of paired helical filaments (PHFs)-like epitopes. PHF-like phosphorylation is not associated with fibril formation. Distribution of PHF-like tau is more intense in the entorhinal cortex, hippocampus and isocortical areas. PHF-like phosphorylation-dephosphorylation during hibernation cycle is synchronized with regression-re-establishment of afferentation. It may reflect a protective mechanism in an unfavorable environment.

It is found in the cytoplasm. The protein resides in the cytosol. The protein localises to the cell membrane. It localises to the cytoskeleton. Its subcellular location is the cell projection. It is found in the axon. The protein resides in the dendrite. Promotes microtubule assembly and stability, and might be involved in the establishment and maintenance of neuronal polarity. The C-terminus binds axonal microtubules while the N-terminus binds neural plasma membrane components, suggesting that tau functions as a linker protein between both. Axonal polarity is predetermined by tau localization (in the neuronal cell) in the domain of the cell body defined by the centrosome. The short isoforms allow plasticity of the cytoskeleton whereas the longer isoforms may preferentially play a role in its stabilization. This chain is Microtubule-associated protein tau (MAPT), found in Spermophilus citellus (European ground squirrel).